We begin with the raw amino-acid sequence, 260 residues long: UPF0246 protein Bcen2424_2223 (260 aa).

The protein belongs to the UPF0246 family.

The sequence is that of UPF0246 protein Bcen2424_2223 from Burkholderia cenocepacia (strain HI2424).